The primary structure comprises 729 residues: Disintegrin and metalloproteinase domain-containing protein 21 (729 aa).

The N-terminal stretch at 1–39 (MECFIMLGADARTLMRVTLLLLWLKALPSLIDLSQTGST) is a signal peptide. A propeptide spanning residues 40-209 (QYLSSPEVVI…MKQNYGKLWP (170 aa)) is cleaved from the precursor. Asn169 is a glycosylation site (N-linked (GlcNAc...) asparagine). Positions 176–183 (MLCSLTEK) match the Cysteine switch motif. Position 178 (Cys178) interacts with Zn(2+). The Extracellular segment spans residues 210–685 (HMWFLELAVV…DSGPTSQKRR (476 aa)). The 191-residue stretch at 212 to 402 (WFLELAVVVD…NQGTCLYNHP (191 aa)) folds into the Peptidase M12B domain. The N-linked (GlcNAc...) asparagine glycan is linked to Asn231. Intrachain disulfides connect Cys320/Cys397, Cys360/Cys382, and Cys362/Cys367. His345 contributes to the Zn(2+) binding site. Glu346 is an active-site residue. Zn(2+) is bound by residues His349 and His355. Residues Asn381, Asn441, and Asn482 are each glycosylated (N-linked (GlcNAc...) asparagine). The Disintegrin domain maps to 410–496 (VKRCGNGMVE…QCPEDGYVQD (87 aa)). 4 disulfide bridges follow: Cys468–Cys488, Cys638–Cys649, Cys643–Cys655, and Cys657–Cys666. Positions 638–667 (CLPETCNRKGVCNNKHHCHCDYGWSPPFCL) constitute an EGF-like domain. A helical membrane pass occupies residues 686–706 (VIITVLSITVPVLSILICLLI). The Cytoplasmic portion of the chain corresponds to 707-729 (AGLYRIYCKIPSGPKETKASSPG).

It depends on Zn(2+) as a cofactor. Has no obvious cleavage site for furin endopeptidase, suggesting that the proteolytic processing is regulated. Highly expressed in Leydig cells. Expressed also in cauda epididymidis, vas deferens, convoluted tubules, kidney and the parietal cells of stomach. Not detected on developing spermatocytes or mature sperm.

It is found in the membrane. Functionally, may be involved in sperm maturation and/or fertilization. May also be involved in epithelia functions associated with establishing and maintaining gradients of ions or nutrients. The sequence is that of Disintegrin and metalloproteinase domain-containing protein 21 (Adam21) from Mus musculus (Mouse).